A 178-amino-acid polypeptide reads, in one-letter code: Large ribosomal subunit protein eL20x (178 aa).

It belongs to the eukaryotic ribosomal protein eL20 family.

The polypeptide is Large ribosomal subunit protein eL20x (RPL18AC) (Arabidopsis thaliana (Mouse-ear cress)).